Reading from the N-terminus, the 209-residue chain is Leukemia-associated protein 7 homolog (209 aa).

A disordered region spans residues 28 to 87 (WGWGDGPSAPGSPRGPDHVPIAQARRPGQLRTRRGLGRGSIGARGSPEAGGLRGAEGGAE).

In Mus musculus (Mouse), this protein is Leukemia-associated protein 7 homolog (Dleu7).